Consider the following 180-residue polypeptide: tRNA (cytidine(56)-2'-O)-methyltransferase (180 aa).

Residues Leu-84 and 112–116 (GAEKV) each bind S-adenosyl-L-methionine.

This sequence belongs to the aTrm56 family. In terms of assembly, homodimer.

It is found in the cytoplasm. The catalysed reaction is cytidine(56) in tRNA + S-adenosyl-L-methionine = 2'-O-methylcytidine(56) in tRNA + S-adenosyl-L-homocysteine + H(+). In terms of biological role, specifically catalyzes the AdoMet-dependent 2'-O-ribose methylation of cytidine at position 56 in tRNAs. The sequence is that of tRNA (cytidine(56)-2'-O)-methyltransferase from Haloarcula marismortui (strain ATCC 43049 / DSM 3752 / JCM 8966 / VKM B-1809) (Halobacterium marismortui).